Here is a 487-residue protein sequence, read N- to C-terminus: Putative sugar kinase YoaC (487 aa).

The protein belongs to the FGGY kinase family.

This chain is Putative sugar kinase YoaC (yoaC), found in Bacillus subtilis (strain 168).